The following is a 216-amino-acid chain: Ribosomal RNA large subunit methyltransferase E (216 aa).

Positions 67, 69, 87, 103, and 128 each coordinate S-adenosyl-L-methionine. Lys168 functions as the Proton acceptor in the catalytic mechanism.

The protein belongs to the class I-like SAM-binding methyltransferase superfamily. RNA methyltransferase RlmE family.

It localises to the cytoplasm. The enzyme catalyses uridine(2552) in 23S rRNA + S-adenosyl-L-methionine = 2'-O-methyluridine(2552) in 23S rRNA + S-adenosyl-L-homocysteine + H(+). Its function is as follows. Specifically methylates the uridine in position 2552 of 23S rRNA at the 2'-O position of the ribose in the fully assembled 50S ribosomal subunit. The sequence is that of Ribosomal RNA large subunit methyltransferase E from Acinetobacter baumannii (strain AB307-0294).